Consider the following 807-residue polypeptide: Glycerol-3-phosphate acyltransferase (807 aa).

An HXXXXD motif motif is present at residues 308–313 (CHRSHM).

Belongs to the GPAT/DAPAT family.

Its subcellular location is the cell inner membrane. The catalysed reaction is sn-glycerol 3-phosphate + an acyl-CoA = a 1-acyl-sn-glycero-3-phosphate + CoA. The protein operates within phospholipid metabolism; CDP-diacylglycerol biosynthesis; CDP-diacylglycerol from sn-glycerol 3-phosphate: step 1/3. The polypeptide is Glycerol-3-phosphate acyltransferase (Shewanella sp. (strain ANA-3)).